We begin with the raw amino-acid sequence, 273 residues long: Torsin-1A (273 aa).

The interaction with SNAPIN stretch occupies residues Lys45–Gly205. Gly56 to Asn63 contacts ATP. Residues Asn97 and Asn112 are each glycosylated (N-linked (GlcNAc...) asparagine).

This sequence belongs to the ClpA/ClpB family. Torsin subfamily. As to quaternary structure, homohexamer. Interacts with TOR1B; the interaction may be specific of neural tissues. Interacts (ATP-bound) with TOR1AIP1 and TOR1AIP2; the interactions induce ATPase activity. Interacts with KLHL14; preferentially when ATP-free. Interacts with KLC1 (via TPR repeats); the interaction associates TOR1A with the kinesin oligomeric complex. Interacts with COPS4; the interaction associates TOR1A with the CSN complex. Interacts with SNAPIN; the interaction is direct and associates SNAPIN with the CSN complex. Interacts with STON2. Interacts (ATP-bound) with SYNE3 (via KASH domain); the interaction is required for SYNE3 nuclear envelope localization. Interacts with VIM; the interaction associates TOR1A with the cytoskeleton. Interacts with PLEC. Interacts (ATP-bound) with SLC6A3; regulates SLC6A3 transport to the plasma membrane. Post-translationally, N-glycosylated.

The protein resides in the endoplasmic reticulum lumen. Its subcellular location is the nucleus membrane. The protein localises to the cell projection. It is found in the growth cone. It localises to the cytoplasmic vesicle membrane. The protein resides in the synapse. Its subcellular location is the synaptosome. The protein localises to the cytoplasm. It is found in the cytoskeleton. It catalyses the reaction ATP + H2O = ADP + phosphate + H(+). In terms of biological role, protein with chaperone functions important for the control of protein folding, processing, stability and localization as well as for the reduction of misfolded protein aggregates. Involved in the regulation of synaptic vesicle recycling, controls STON2 protein stability in collaboration with the COP9 signalosome complex (CSN). In the nucleus, may link the cytoskeleton with the nuclear envelope, this mechanism seems to be crucial for the control of nuclear polarity, cell movement and, specifically in neurons, nuclear envelope integrity. Participates in the cellular trafficking and may regulate the subcellular location of multipass membrane proteins such as the dopamine transporter SLC6A3, leading to the modulation of dopamine neurotransmission. In the endoplasmic reticulum, plays a role in the quality control of protein folding by increasing clearance of misfolded proteins such as SGCE variants or holding them in an intermediate state for proper refolding. May have a redundant function with TOR1B in non-neural tissues. In Cricetus cricetus (Black-bellied hamster), this protein is Torsin-1A (TOR1A).